The primary structure comprises 473 residues: Iron transporter SMF3 (473 aa).

Transmembrane regions (helical) follow at residues 14 to 34 and 44 to 64; these read FIGP…YATS and TLLF…CLCV. Asn-87 is a glycosylation site (N-linked (GlcNAc...) asparagine). Transmembrane regions (helical) follow at residues 97–117, 119–139, 152–172, 198–218, 257–277, 297–317, 352–372, 373–393, and 448–468; these read AIIA…QILF, IPLT…LMFY, FEFG…LELF, ALYI…LYLG, LIIS…IVAG, LLVH…MLCS, LIAI…GISD, ILNF…APLI, and VFVW…YLLG.

Belongs to the NRAMP family.

Its subcellular location is the vacuole membrane. It is found in the endoplasmic reticulum membrane. Its function is as follows. Has a role in controlling the cellular iron ion levels. Mobilizes vacuolar stores of iron in conditions of low iron levels. This Saccharomyces cerevisiae (strain ATCC 204508 / S288c) (Baker's yeast) protein is Iron transporter SMF3 (SMF3).